Consider the following 221-residue polypeptide: Queuosine precursor transporter (221 aa).

Topologically, residues 1–12 are cytoplasmic; sequence MNVFSQTQRYKA. The chain crosses the membrane as a helical span at residues 13–33; it reads LFWLSLFHLLVITSSNYLVQL. A topological domain (periplasmic) is located at residue Pro34. Residues 35–55 form a helical membrane-spanning segment; the sequence is VSILGFHTTWGAFSFPFIFLA. Residues 56-70 are Cytoplasmic-facing; that stretch reads TDLTVRIFGAPLARR. Residues 71-91 traverse the membrane as a helical segment; it reads IIFAVMIPALLISYVISSLFY. Residues 92 to 97 lie on the Periplasmic side of the membrane; the sequence is MGSWQG. The chain crosses the membrane as a helical span at residues 98 to 118; that stretch reads FGALAHFNLFVARIATASFMA. Topologically, residues 119–143 are cytoplasmic; the sequence is YALGQILDVHVFNRLRQSRRWWLAP. Residues 144–164 traverse the membrane as a helical segment; the sequence is TASTLFGNVSDTLAFFFIAFW. Over 165-184 the chain is Periplasmic; sequence RSPDAFMAEHWMEIALVDYC. Residues 185–205 form a helical membrane-spanning segment; the sequence is FKVLISIVFFLPMYGVLLNML. At 206-221 the chain is on the cytoplasmic side; it reads LKRLADKSEINALQAS.

Belongs to the vitamin uptake transporter (VUT/ECF) (TC 2.A.88) family. Q precursor transporter subfamily.

Its subcellular location is the cell inner membrane. Involved in the import of queuosine (Q) precursors, required for Q precursor salvage. Transports 7-cyano-7-deazaguanine (preQ(0)) and 7-aminomethyl-7-deazaguanine (preQ(1)), with a preference for preQ(0). The sequence is that of Queuosine precursor transporter (yhhQ) from Escherichia coli (strain K12).